The primary structure comprises 518 residues: Chromosomal replication initiator protein DnaA (518 aa).

Residues 1-73 (MTLAEFWPLC…REELAAGRPA (73 aa)) form a domain I, interacts with DnaA modulators region. Positions 73 to 180 (AFVFKPGEGV…DAEEARYEQT (108 aa)) are domain II. A disordered region spans residues 144–180 (HEPRQAAGPASRPESAAVAKARTDAQRDAEEARYEQT). Over residues 164–177 (ARTDAQRDAEEARY) the composition is skewed to basic and acidic residues. Positions 181-397 (NLSPDYTFDT…GAFNRVGASS (217 aa)) are domain III, AAA+ region. The ATP site is built by glycine 225, glycine 227, lysine 228, and threonine 229. Residues 398 to 518 (RFMNRPVIDI…YEKLLILIQN (121 aa)) form a domain IV, binds dsDNA region.

It belongs to the DnaA family. In terms of assembly, oligomerizes as a right-handed, spiral filament on DNA at oriC.

It localises to the cytoplasm. In terms of biological role, plays an essential role in the initiation and regulation of chromosomal replication. ATP-DnaA binds to the origin of replication (oriC) to initiate formation of the DNA replication initiation complex once per cell cycle. Binds the DnaA box (a 9 base pair repeat at the origin) and separates the double-stranded (ds)DNA. Forms a right-handed helical filament on oriC DNA; dsDNA binds to the exterior of the filament while single-stranded (ss)DNA is stabiized in the filament's interior. The ATP-DnaA-oriC complex binds and stabilizes one strand of the AT-rich DNA unwinding element (DUE), permitting loading of DNA polymerase. After initiation quickly degrades to an ADP-DnaA complex that is not apt for DNA replication. Binds acidic phospholipids. This chain is Chromosomal replication initiator protein DnaA, found in Neisseria gonorrhoeae (strain ATCC 700825 / FA 1090).